A 359-amino-acid chain; its full sequence is Peptide chain release factor 1 (359 aa).

At Gln236 the chain carries N5-methylglutamine.

This sequence belongs to the prokaryotic/mitochondrial release factor family. In terms of processing, methylated by PrmC. Methylation increases the termination efficiency of RF1.

The protein localises to the cytoplasm. Peptide chain release factor 1 directs the termination of translation in response to the peptide chain termination codons UAG and UAA. This is Peptide chain release factor 1 from Streptococcus pneumoniae serotype 2 (strain D39 / NCTC 7466).